We begin with the raw amino-acid sequence, 291 residues long: Putative carboxymethylenebutenolidase (291 aa).

An N-terminal signal peptide occupies residues 1–40 (MTAFDADLRSLAAQTTLSRRTVIATSLATGFALAVQPVAA). Active-site residues include cysteine 170, aspartate 227, and histidine 259.

It belongs to the dienelactone hydrolase family.

The catalysed reaction is 2-(5-oxo-2,5-dihydrofuran-2-ylidene)acetate + H2O = 4-oxohex-2-enedioate + H(+). This Methylorubrum extorquens (strain ATCC 14718 / DSM 1338 / JCM 2805 / NCIMB 9133 / AM1) (Methylobacterium extorquens) protein is Putative carboxymethylenebutenolidase.